The sequence spans 218 residues: tRNA (guanosine(18)-2'-O)-methyltransferase (218 aa).

S-adenosyl-L-methionine contacts are provided by T111 and I154.

The protein belongs to the class IV-like SAM-binding methyltransferase superfamily. RNA methyltransferase TrmH family.

The enzyme catalyses guanosine(18) in tRNA + S-adenosyl-L-methionine = 2'-O-methylguanosine(18) in tRNA + S-adenosyl-L-homocysteine + H(+). In terms of biological role, catalyzes the 2'-O methylation of guanosine at position 18 in tRNA. The chain is tRNA (guanosine(18)-2'-O)-methyltransferase from Borreliella burgdorferi (strain ATCC 35210 / DSM 4680 / CIP 102532 / B31) (Borrelia burgdorferi).